The primary structure comprises 960 residues: MLLLLLVPLFLRPLGAGGAQTPNVTSEGCQIIHPPWEGGIRYRGLTRDQVKAINFLPVDYEIEYVCRGEREVVGPKVRKCLANGSWTDMDTPSRCVRICSKSYLTLENGKVFLTGGDLPALDGARVDFRCDPDFHLVGSSRSICSQGQWSTPKPHCQVNRTPHSERRAVYIGALFPMSGGWPGGQACQPAVEMALEDVNSRRDILPDYELKLIHHDSKCDPGQATKYLYELLYNDPIKIILMPGCSSVSTLVAEAARMWNLIVLSYGSSSPALSNRQRFPTFFRTHPSATLHNPTRVKLFEKWGWKKIATIQQTTEVFTSTLDDLEERVKEAGIEITFRQSFFSDPAVPVKNLKRQDARIIVGLFYETEARKVFCEVYKERLFGKKYVWFLIGWYADNWFKTYDPSINCTVEEMTEAVEGHITTEIVMLNPANTRSISNMTSQEFVEKLTKRLKRHPEETGGFQEAPLAYDAIWALALALNKTSGGGGRSGVRLEDFNYNNQTITDQIYRAMNSSSFEGVSGHVVFDASGSRMAWTLIEQLQGGSYKKIGYYDSTKDDLSWSKTDKWIGGSPPADQTLVIKTFRFLSQKLFISVSVLSSLGIVLAVVCLSFNIYNSHVRYIQNSQPNLNNLTAVGCSLALAAVFPLGLDGYHIGRSQFPFVCQARLWLLGLGFSLGYGSMFTKIWWVHTVFTKKEEKKEWRKTLEPWKLYATVGLLVGMDILTLAIWQIVDPLHRTIETFAKEEPKEDIDVSILPQLEHCSSKKMNTWLGIFYGYKGLLLLLGIFLAYETKSVSTEKINDHRAVGMAIYNVAVLCLITAPVTMILSSQQDAAFAFASLAIVFSSYITLVVLFVPKMRRLITRGEWQSEAQDTMKTGSSTNNNEEEKSRLLEKENRELEKIIAEKEERVSELRHQLQSRQQIRSRRHPPTPPDPSGGLPRGPSEPPDRLSCDGSRVHLLYK.

Positions 1 to 19 (MLLLLLVPLFLRPLGAGGA) are cleaved as a signal peptide. Residues 20–590 (QTPNVTSEGC…KTFRFLSQKL (571 aa)) are Extracellular-facing. N-linked (GlcNAc...) asparagine glycans are attached at residues Asn-23 and Asn-83. 2 consecutive Sushi domains span residues 29–95 (CQII…PSRC) and 97–158 (RICS…HCQV). Cystine bridges form between Cys-99/Cys-144, Cys-130/Cys-156, and Cys-219/Cys-245. Positions 246, 269, 286, and 366 each coordinate 4-aminobutanoate. A disulfide bridge links Cys-375 with Cys-409. N-linked (GlcNAc...) asparagine glycosylation is found at Asn-408 and Asn-439. A 4-aminobutanoate-binding site is contributed by Glu-465. N-linked (GlcNAc...) asparagine glycans are attached at residues Asn-481, Asn-501, and Asn-513. Residues 591–611 (FISVSVLSSLGIVLAVVCLSF) traverse the membrane as a helical segment. The Cytoplasmic portion of the chain corresponds to 612 to 630 (NIYNSHVRYIQNSQPNLNN). The chain crosses the membrane as a helical span at residues 631–651 (LTAVGCSLALAAVFPLGLDGY). Over 652 to 666 (HIGRSQFPFVCQARL) the chain is Extracellular. Residues 667 to 687 (WLLGLGFSLGYGSMFTKIWWV) form a helical membrane-spanning segment. Over 688–709 (HTVFTKKEEKKEWRKTLEPWKL) the chain is Cytoplasmic. Residues 710-730 (YATVGLLVGMDILTLAIWQIV) traverse the membrane as a helical segment. Over 731–767 (DPLHRTIETFAKEEPKEDIDVSILPQLEHCSSKKMNT) the chain is Extracellular. A helical transmembrane segment spans residues 768–788 (WLGIFYGYKGLLLLLGIFLAY). The Cytoplasmic segment spans residues 789 to 803 (ETKSVSTEKINDHRA). The helical transmembrane segment at 804 to 824 (VGMAIYNVAVLCLITAPVTMI) threads the bilayer. At 825 to 832 (LSSQQDAA) the chain is on the extracellular side. Residues 833–853 (FAFASLAIVFSSYITLVVLFV) form a helical membrane-spanning segment. The Cytoplasmic portion of the chain corresponds to 854–960 (PKMRRLITRG…DGSRVHLLYK (107 aa)). Disordered regions lie at residues 866 to 891 (QSEA…RLLE) and 908 to 960 (VSEL…LLYK). Residues 867-879 (SEAQDTMKTGSST) are compositionally biased toward polar residues. The stretch at 868–924 (EAQDTMKTGSSTNNNEEEKSRLLEKENRELEKIIAEKEERVSELRHQLQSRQQIRSR) forms a coiled coil. Thr-872 carries the post-translational modification Phosphothreonine. The tract at residues 887–915 (SRLLEKENRELEKIIAEKEERVSELRHQL) is interaction with ATF4. Phosphothreonine is present on Thr-929.

Belongs to the G-protein coupled receptor 3 family. GABA-B receptor subfamily. As to quaternary structure, heterodimer of GABBR1 and GABBR2. Homodimers may form, but are inactive. Interacts (via C-terminus) with ATF4 (via leucine zipper domain). Interacts with JAKMIP1. Interacts with KCTD8, KCTD12, KCTD12B and KCTD16; this interaction determines the pharmacology and kinetics of the receptor response, the KCTD proteins markedly accelerating the GABA-B response, although to different extents. As to expression, expressed in neuronal tissue including cortex, cerebellum and spinal cord. Not detected in non-neuronal tissues including heart, liver, spleen and kidney.

The protein resides in the cell membrane. The protein localises to the postsynaptic cell membrane. It is found in the cell projection. It localises to the dendrite. Component of a heterodimeric G-protein coupled receptor for GABA, formed by GABBR1 and GABBR2. Within the heterodimeric GABA receptor, only GABBR1 seems to bind agonists, while GABBR2 mediates coupling to G proteins. Ligand binding causes a conformation change that triggers signaling via guanine nucleotide-binding proteins (G proteins) and modulates the activity of down-stream effectors, such as adenylate cyclase. Signaling inhibits adenylate cyclase, stimulates phospholipase A2, activates potassium channels, inactivates voltage-dependent calcium-channels and modulates inositol phospholipid hydrolysis. Calcium is required for high affinity binding to GABA. Plays a critical role in the fine-tuning of inhibitory synaptic transmission. Pre-synaptic GABA receptor inhibits neurotransmitter release by down-regulating high-voltage activated calcium channels, whereas postsynaptic GABA receptor decreases neuronal excitability by activating a prominent inwardly rectifying potassium (Kir) conductance that underlies the late inhibitory postsynaptic potentials. Not only implicated in synaptic inhibition but also in hippocampal long-term potentiation, slow wave sleep, muscle relaxation and antinociception. This Mus musculus (Mouse) protein is Gamma-aminobutyric acid type B receptor subunit 1 (Gabbr1).